Consider the following 955-residue polypeptide: UPF0182 protein PMT_0755 (955 aa).

A run of 9 helical transmembrane segments spans residues 25-45, 58-78, 107-127, 146-166, 178-198, 214-234, 264-284, 313-333, and 340-360; these read LLLSIAAFCLLMRVQVEWLWF, WLWQLGGLLLALLVVATCQLW, LLGCFVVVVGDLVLLSRLAWL, IWALVIPLSCVFISICVMLGN, CFCFSISIARGWGLWALALAI, FGLGQFPALAFALVVLLAQLI, CNFLRPLIGIILLTLSALLWL, SLASLAILVFAFLVIPFTWIQ, and LIASIIGVGAILLEVLLAPFV.

The protein belongs to the UPF0182 family.

It localises to the cell membrane. In Prochlorococcus marinus (strain MIT 9313), this protein is UPF0182 protein PMT_0755.